The chain runs to 254 residues: Imidazole glycerol phosphate synthase subunit HisF (254 aa).

Catalysis depends on residues Asp-13 and Asp-132.

This sequence belongs to the HisA/HisF family. As to quaternary structure, heterodimer of HisH and HisF.

The protein localises to the cytoplasm. It carries out the reaction 5-[(5-phospho-1-deoxy-D-ribulos-1-ylimino)methylamino]-1-(5-phospho-beta-D-ribosyl)imidazole-4-carboxamide + L-glutamine = D-erythro-1-(imidazol-4-yl)glycerol 3-phosphate + 5-amino-1-(5-phospho-beta-D-ribosyl)imidazole-4-carboxamide + L-glutamate + H(+). It participates in amino-acid biosynthesis; L-histidine biosynthesis; L-histidine from 5-phospho-alpha-D-ribose 1-diphosphate: step 5/9. In terms of biological role, IGPS catalyzes the conversion of PRFAR and glutamine to IGP, AICAR and glutamate. The HisF subunit catalyzes the cyclization activity that produces IGP and AICAR from PRFAR using the ammonia provided by the HisH subunit. This chain is Imidazole glycerol phosphate synthase subunit HisF, found in Sulfurovum sp. (strain NBC37-1).